A 1379-amino-acid polypeptide reads, in one-letter code: DNA-directed RNA polymerase subunit beta'' (1379 aa).

Zn(2+)-binding residues include cysteine 220, cysteine 293, cysteine 300, and cysteine 303.

Belongs to the RNA polymerase beta' chain family. RpoC2 subfamily. In terms of assembly, in plastids the minimal PEP RNA polymerase catalytic core is composed of four subunits: alpha, beta, beta', and beta''. When a (nuclear-encoded) sigma factor is associated with the core the holoenzyme is formed, which can initiate transcription. Zn(2+) is required as a cofactor.

It is found in the plastid. It localises to the chloroplast. The enzyme catalyses RNA(n) + a ribonucleoside 5'-triphosphate = RNA(n+1) + diphosphate. Its function is as follows. DNA-dependent RNA polymerase catalyzes the transcription of DNA into RNA using the four ribonucleoside triphosphates as substrates. The chain is DNA-directed RNA polymerase subunit beta'' from Crucihimalaya wallichii (Rock-cress).